We begin with the raw amino-acid sequence, 137 residues long: Putative pre-16S rRNA nuclease (137 aa).

It belongs to the YqgF nuclease family.

The protein localises to the cytoplasm. Functionally, could be a nuclease involved in processing of the 5'-end of pre-16S rRNA. The sequence is that of Putative pre-16S rRNA nuclease from Flavobacterium psychrophilum (strain ATCC 49511 / DSM 21280 / CIP 103535 / JIP02/86).